A 232-amino-acid chain; its full sequence is dITP/XTP pyrophosphatase (232 aa).

Position 10 to 15 (10 to 15) interacts with substrate; the sequence is TRNKGK. Aspartate 72 functions as the Proton acceptor in the catalytic mechanism. Mg(2+) is bound at residue aspartate 72. Residues serine 73, 153 to 156, lysine 176, and 181 to 182 contribute to the substrate site; these read FGYD and HR.

Belongs to the HAM1 NTPase family. Homodimer. Mg(2+) is required as a cofactor.

The catalysed reaction is XTP + H2O = XMP + diphosphate + H(+). The enzyme catalyses dITP + H2O = dIMP + diphosphate + H(+). It carries out the reaction ITP + H2O = IMP + diphosphate + H(+). Functionally, pyrophosphatase that catalyzes the hydrolysis of nucleoside triphosphates to their monophosphate derivatives, with a high preference for the non-canonical purine nucleotides XTP (xanthosine triphosphate), dITP (deoxyinosine triphosphate) and ITP. Seems to function as a house-cleaning enzyme that removes non-canonical purine nucleotides from the nucleotide pool, thus preventing their incorporation into DNA/RNA and avoiding chromosomal lesions. This is dITP/XTP pyrophosphatase from Syntrophobacter fumaroxidans (strain DSM 10017 / MPOB).